The sequence spans 213 residues: Protein GrpE (213 aa).

The disordered stretch occupies residues 1-61 (MEQGEKQVME…AEKAPTAEEL (61 aa)). The span at 13-35 (TYDEPEREQPIEEEAAPQPEEES) shows a compositional bias: acidic residues.

The protein belongs to the GrpE family. As to quaternary structure, homodimer.

The protein resides in the cytoplasm. Its function is as follows. Participates actively in the response to hyperosmotic and heat shock by preventing the aggregation of stress-denatured proteins, in association with DnaK and GrpE. It is the nucleotide exchange factor for DnaK and may function as a thermosensor. Unfolded proteins bind initially to DnaJ; upon interaction with the DnaJ-bound protein, DnaK hydrolyzes its bound ATP, resulting in the formation of a stable complex. GrpE releases ADP from DnaK; ATP binding to DnaK triggers the release of the substrate protein, thus completing the reaction cycle. Several rounds of ATP-dependent interactions between DnaJ, DnaK and GrpE are required for fully efficient folding. The polypeptide is Protein GrpE (Geobacillus kaustophilus (strain HTA426)).